The following is a 135-amino-acid chain: Photosystem II extrinsic protein V (135 aa).

Residues cysteine 37, cysteine 40, histidine 41, and histidine 92 each contribute to the heme c site.

It belongs to the cytochrome c family. PsbV subfamily. In terms of assembly, PSII is composed of 1 copy each of membrane proteins PsbA, PsbB, PsbC, PsbD, PsbE, PsbF, PsbH, PsbI, PsbJ, PsbK, PsbL, PsbM, PsbT, PsbX, PsbY, PsbZ, Psb30/Ycf12, peripheral proteins PsbO, CyanoQ (PsbQ), PsbU, PsbV and a large number of cofactors. It forms dimeric complexes. Heme c serves as cofactor.

It is found in the cellular thylakoid membrane. In terms of biological role, one of the extrinsic, lumenal subunits of photosystem II (PSII). PSII is a light-driven water plastoquinone oxidoreductase, using light energy to abstract electrons from H(2)O, generating a proton gradient subsequently used for ATP formation. The extrinsic proteins stabilize the structure of photosystem II oxygen-evolving complex (OEC), the ion environment of oxygen evolution and protect the OEC against heat-induced inactivation. Low-potential cytochrome c that plays a role in the OEC of PSII. This Microcystis aeruginosa protein is Photosystem II extrinsic protein V.